A 298-amino-acid chain; its full sequence is Flavin-dependent thymidylate synthase (298 aa).

Positions 41–251 (GFVRLVDYMG…PLTYAAFVEY (211 aa)) constitute a ThyX domain. FAD contacts are provided by residues T87, 110-112 (RHR), and E118. DUMP contacts are provided by residues 107–110 (QWVR), 118–122 (EYSAR), and R190. Positions 110-120 (RHRTANVNEYS) match the ThyX motif motif. Residues 206–208 (DLH) and H212 contribute to the FAD site. Residue R217 participates in dUMP binding. The active-site Involved in ionization of N3 of dUMP, leading to its activation is R217.

The protein belongs to the thymidylate synthase ThyX family. As to quaternary structure, homotetramer. The cofactor is FAD.

It catalyses the reaction dUMP + (6R)-5,10-methylene-5,6,7,8-tetrahydrofolate + NADPH + H(+) = dTMP + (6S)-5,6,7,8-tetrahydrofolate + NADP(+). Its pathway is pyrimidine metabolism; dTTP biosynthesis. Functionally, catalyzes the reductive methylation of 2'-deoxyuridine-5'-monophosphate (dUMP) to 2'-deoxythymidine-5'-monophosphate (dTMP) while utilizing 5,10-methylenetetrahydrofolate (mTHF) as the methyl donor, and NADPH and FADH(2) as the reductant. The polypeptide is Flavin-dependent thymidylate synthase (Ehrlichia ruminantium (strain Welgevonden)).